Reading from the N-terminus, the 92-residue chain is Small ribosomal subunit protein uS19 (92 aa).

This sequence belongs to the universal ribosomal protein uS19 family.

Functionally, protein S19 forms a complex with S13 that binds strongly to the 16S ribosomal RNA. This is Small ribosomal subunit protein uS19 from Borrelia recurrentis (strain A1).